The sequence spans 282 residues: 2-dehydro-3-deoxyphosphooctonate aldolase (282 aa).

This sequence belongs to the KdsA family.

It is found in the cytoplasm. It catalyses the reaction D-arabinose 5-phosphate + phosphoenolpyruvate + H2O = 3-deoxy-alpha-D-manno-2-octulosonate-8-phosphate + phosphate. The protein operates within carbohydrate biosynthesis; 3-deoxy-D-manno-octulosonate biosynthesis; 3-deoxy-D-manno-octulosonate from D-ribulose 5-phosphate: step 2/3. It participates in bacterial outer membrane biogenesis; lipopolysaccharide biosynthesis. This Shewanella baltica (strain OS185) protein is 2-dehydro-3-deoxyphosphooctonate aldolase.